The sequence spans 196 residues: Large ribosomal subunit protein uL14my (196 aa).

Residues 1-62 (MATALASKLS…TILKCVDNSC (62 aa)) constitute a mitochondrion transit peptide. The segment at 148 to 175 (EKKGQNNSHGSKRKMEYNQPTGTRVFGP) is disordered.

This sequence belongs to the universal ribosomal protein uL14 family. As to quaternary structure, part of the mitochondrial 50S ribosomal subunit. As to expression, mostly expressed in pistils and inflorescences, including floral organs and meristems, and, to a lower extent, in leaves.

The protein resides in the mitochondrion. Binds to 23S rRNA in mitochondrion. Required for the formation of the proximal region of the ovule primordium during floral organogenesis, thus participating in patterning and growth of ovule. Also regulates the initiation and/or maintenance of integument and embryo sac ontogenesis. Prevents inappropriate cell death in the young ovule. The protein is Large ribosomal subunit protein uL14my (HLL) of Arabidopsis thaliana (Mouse-ear cress).